Here is a 298-residue protein sequence, read N- to C-terminus: NAD-dependent L-serine dehydrogenase (298 aa).

NAD(+) is bound by residues 2 to 31 (KQIA…NVFD), 65 to 66 (LP), P66, and T96. K171 is a catalytic residue. Position 246 (K246) interacts with NAD(+).

The protein belongs to the HIBADH-related family. As to quaternary structure, homotetramer, dimer of dimers.

The catalysed reaction is L-serine + NAD(+) = aminoacetaldehyde + CO2 + NADH. The protein operates within amino-acid degradation. NAD-dependent L-serine dehydrogenase that catalyzes the oxidation of L-serine and methyl-L-serine and is possibly involved in serine catabolism. Has low activity toward beta-hydroxyisobutyrate. In Pseudomonas aeruginosa (strain ATCC 15692 / DSM 22644 / CIP 104116 / JCM 14847 / LMG 12228 / 1C / PRS 101 / PAO1), this protein is NAD-dependent L-serine dehydrogenase.